The following is a 1358-amino-acid chain: Phosphoinositide 3-kinase regulatory subunit 4 (1358 aa).

Glycine 2 carries the N-myristoyl glycine lipid modification. Residues 26-324 form the Protein kinase domain; it reads FEYDKSLGST…AFPEIFYTFL (299 aa). ATP-binding positions include 32–40 and lysine 53; that span reads LGSTRFFKV. Residue aspartate 148 is the Proton acceptor of the active site. HEAT repeat units follow at residues 373 to 411, 413 to 450, 458 to 495, 531 to 570, 572 to 610, 612 to 648, and 690 to 726; these read NGLV…RLGV, ILLD…LVKE, IYPE…TALR, QALH…FFGR, KAND…YVGW, SSSI…LGLL, and DVYC…PVSR. Phosphoserine occurs at positions 808, 813, 853, and 865. The segment at 875-899 is disordered; the sequence is LPKGSDQEVIQTGKPPRSESSAGIC. WD repeat units lie at residues 991–1030, 1040–1079, 1093–1134, 1139–1178, 1182–1223, and 1237–1278; these read EHKS…GKTT, RVGG…LPKS, KEDG…NAWT, LKSG…PISS, PSRA…RRFT, and PSPH…RSYV. The disordered stretch occupies residues 1307-1326; sequence KQKVGPSDDTPRRGPESLPV. The segment covering 1315-1326 has biased composition (basic and acidic residues); sequence DTPRRGPESLPV. Position 1316 is a phosphothreonine (threonine 1316). The WD 7 repeat unit spans residues 1327–1358; the sequence is GHHDIITDVATFQTTQGFIVTASRDGIVKVWK.

This sequence belongs to the protein kinase superfamily. Ser/Thr protein kinase family. In terms of assembly, component of the PI3K (PI3KC3/PI3K-III/class III phosphatidylinositol 3-kinase) complex the core of which is composed of the catalytic subunit PIK3C3, the regulatory subunit PIK3R4 and BECN1 associating with additional regulatory/auxiliary subunits to form alternative complex forms. Alternative complex forms containing a fourth regulatory subunit in a mutually exclusive manner are PI3K complex I (PI3KC3-C1) containing ATG14, and PI3K complex II (PI3KC3-C2) containing UVRAG. PI3KC3-C1 displays a V-shaped architecture with PIK3R4 serving as a bridge between PIK3C3 and the ATG14:BECN1 subcomplex. Both, PI3KC3-C1 and PI3KC3-C2, can associate with further regulatory subunits, such as RUBCN, SH3GLB1/Bif-1, AMBRA1 and NRBF2. PI3KC3-C1 probably associates with PIK3CB. Interacts with RAB7A in the presence of PIK3C3/VPS34. Interacts with NRBF2. Interacts with ARMC3. Mn(2+) serves as cofactor. Myristoylated. In terms of processing, probably autophosphorylated.

Its subcellular location is the late endosome. It localises to the cytoplasmic vesicle. The protein resides in the autophagosome. The protein localises to the membrane. It carries out the reaction L-seryl-[protein] + ATP = O-phospho-L-seryl-[protein] + ADP + H(+). The enzyme catalyses L-threonyl-[protein] + ATP = O-phospho-L-threonyl-[protein] + ADP + H(+). Its function is as follows. Regulatory subunit of the PI3K complex that mediates formation of phosphatidylinositol 3-phosphate; different complex forms are believed to play a role in multiple membrane trafficking pathways: PI3KC3-C1 is involved in initiation of autophagosomes and PI3KC3-C2 in maturation of autophagosomes and endocytosis. Involved in regulation of degradative endocytic trafficking and cytokinesis, probably in the context of PI3KC3-C2. Regulatory subunit of the PI3K complex. May regulate membrane trafficking late in the endocytic pathway. In Pongo abelii (Sumatran orangutan), this protein is Phosphoinositide 3-kinase regulatory subunit 4 (PIK3R4).